A 493-amino-acid chain; its full sequence is ATP synthase subunit beta, chloroplastic (493 aa).

An ATP-binding site is contributed by 170-177; the sequence is GGAGVGKT.

Belongs to the ATPase alpha/beta chains family. In terms of assembly, F-type ATPases have 2 components, CF(1) - the catalytic core - and CF(0) - the membrane proton channel. CF(1) has five subunits: alpha(3), beta(3), gamma(1), delta(1), epsilon(1). CF(0) has four main subunits: a(1), b(1), b'(1) and c(9-12).

The protein localises to the plastid. It localises to the chloroplast thylakoid membrane. It catalyses the reaction ATP + H2O + 4 H(+)(in) = ADP + phosphate + 5 H(+)(out). Its function is as follows. Produces ATP from ADP in the presence of a proton gradient across the membrane. The catalytic sites are hosted primarily by the beta subunits. The chain is ATP synthase subunit beta, chloroplastic from Lachenalia pusilla (Cape cowslips).